The sequence spans 386 residues: Alanine racemase (386 aa).

The Proton acceptor; specific for D-alanine role is filled by K38. An N6-(pyridoxal phosphate)lysine modification is found at K38. R136 is a substrate binding site. Y267 (proton acceptor; specific for L-alanine) is an active-site residue. Residue M315 participates in substrate binding.

The protein belongs to the alanine racemase family. Pyridoxal 5'-phosphate serves as cofactor.

It carries out the reaction L-alanine = D-alanine. The protein operates within amino-acid biosynthesis; D-alanine biosynthesis; D-alanine from L-alanine: step 1/1. Its function is as follows. Catalyzes the interconversion of L-alanine and D-alanine. May also act on other amino acids. In Clostridium perfringens (strain SM101 / Type A), this protein is Alanine racemase (alr).